The following is a 407-amino-acid chain: Nuclear hormone receptor family member nhr-134 (407 aa).

The segment at 11 to 31 (CEICGQKTSGRHFGVMSCRSC) adopts an NR C4-type zinc-finger fold. The segment at 47-66 (RCPNGNCKLLENGKFKCKKC) adopts an NR C4-type; degenerate zinc-finger fold. The region spanning 157–407 (QFHNSLERLA…FSEPDMFEST (251 aa)) is the NR LBD domain.

The protein belongs to the nuclear hormone receptor family.

The protein resides in the nucleus. In terms of biological role, orphan nuclear receptor. The protein is Nuclear hormone receptor family member nhr-134 (nhr-134) of Caenorhabditis elegans.